Reading from the N-terminus, the 74-residue chain is Protein DELETION OF SUV3 SUPPRESSOR 1(I) (74 aa).

A disordered region spans residues Glu35 to Lys74. The segment covering Trp46–Asp57 has biased composition (acidic residues). The span at Asp58–Lys74 shows a compositional bias: basic and acidic residues.

It belongs to the DSS1/SEM1 family. As to quaternary structure, part of the 26S proteasome. Interacts with BRCA2A and BRCA2B. Interacts with UCH1 and UCH2. Can form a tripartite complex with both RAD51 and BRCA2B or both DMC1 and BRCA2B.

Its function is as follows. Subunit of the 26S proteasome which plays a role in ubiquitin-dependent proteolysis. This Arabidopsis thaliana (Mouse-ear cress) protein is Protein DELETION OF SUV3 SUPPRESSOR 1(I).